Consider the following 540-residue polypeptide: Phosphoenolpyruvate carboxykinase (ATP) (540 aa).

R65 provides a ligand contact to substrate. K87 carries the post-translational modification N6-acetyllysine. The substrate site is built by Y207 and K213. Residues K213, H232, and 248–256 (GLSGTGKTT) each bind ATP. Residues K213 and H232 each coordinate Mn(2+). D269 is a Mn(2+) binding site. ATP contacts are provided by residues E297, R333, 449–450 (RI), and T455. Residue R333 coordinates substrate. K523 bears the N6-acetyllysine mark.

It belongs to the phosphoenolpyruvate carboxykinase (ATP) family. As to quaternary structure, monomer. Mn(2+) is required as a cofactor.

The protein resides in the cytoplasm. The enzyme catalyses oxaloacetate + ATP = phosphoenolpyruvate + ADP + CO2. Its pathway is carbohydrate biosynthesis; gluconeogenesis. Its function is as follows. Involved in the gluconeogenesis. Catalyzes the conversion of oxaloacetate (OAA) to phosphoenolpyruvate (PEP) through direct phosphoryl transfer between the nucleoside triphosphate and OAA. This is Phosphoenolpyruvate carboxykinase (ATP) from Escherichia coli O7:K1 (strain IAI39 / ExPEC).